A 208-amino-acid polypeptide reads, in one-letter code: Redox-sensing transcriptional repressor Rex (208 aa).

A DNA-binding region (H-T-H motif) is located at residues 16–55 (VYSRYLENLYRKGITTVSSADIAQGVGVTSAQVRKDLAYF). 90-95 (GAGNLG) serves as a coordination point for NAD(+).

The protein belongs to the transcriptional regulatory Rex family. In terms of assembly, homodimer.

Its subcellular location is the cytoplasm. In terms of biological role, modulates transcription in response to changes in cellular NADH/NAD(+) redox state. The chain is Redox-sensing transcriptional repressor Rex from Carboxydothermus hydrogenoformans (strain ATCC BAA-161 / DSM 6008 / Z-2901).